The following is a 953-amino-acid chain: MEEQGHSEMEIIPSESHPHIQLLKSNRELLVTHIRNTQCLVDNLLKNDYFSAEDAEIVCACPTQPDKVRKILDLVQSKGEEVSEFFLYLLQQLADAYVDLRPWLLEIGFSPSLLTQSKVVVNTDPVSRYTQQLRHHLGRDSKFVLCYAQKEELLLEEIYMDTIMELVGFSNESLGSLNSLACLLDHTTGILNEQGETIFILGDAGVGKSMLLQRLQSLWATGRLDAGVKFFFHFRCRMFSCFKESDRLCLQDLLFKHYCYPERDPEEVFAFLLRFPHVALFTFDGLDELHSDLDLSRVPDSSCPWEPAHPLVLLANLLSGKLLKGASKLLTARTGIEVPRQFLRKKVLLRGFSPSHLRAYARRMFPERALQDRLLSQLEANPNLCSLCSVPLFCWIIFRCFQHFRAAFEGSPQLPDCTMTLTDVFLLVTEVHLNRMQPSSLVQRNTRSPVETLHAGRDTLCSLGQVAHRGMEKSLFVFTQEEVQASGLQERDMQLGFLRALPELGPGGDQQSYEFFHLTLQAFFTAFFLVLDDRVGTQELLRFFQEWMPPAGAATTSCYPPFLPFQCLQGSGPAREDLFKNKDHFQFTNLFLCGLLSKAKQKLLRHLVPAAALRRKRKALWAHLFSSLRGYLKSLPRVQVESFNQVQAMPTFIWMLRCIYETQSQKVGQLAARGICANYLKLTYCNACSADCSALSFVLHHFPKRLALDLDNNNLNDYGVRELQPCFSRLTVLRLSVNQITDGGVKVLSEELTKYKIVTYLGLYNNQITDVGARYVTKILDECKGLTHLKLGKNKITSEGGKYLALAVKNSKSISEVGMWGNQVGDEGAKAFAEALRNHPSLTTLSLASNGISTEGGKSLARALQQNTSLEILWLTQNELNDEVAESLAEMLKVNQTLKHLWLIQNQITAKGTAQLADALQSNTGITEICLNGNLIKPEEAKVYEDEKRIICF.

Residues 15 to 105 form the CARD domain; sequence ESHPHIQLLK…AYVDLRPWLL (91 aa). The NACHT domain occupies 196 to 531; sequence ETIFILGDAG…AFFTAFFLVL (336 aa). 202–209 serves as a coordination point for ATP; the sequence is GDAGVGKS. S-palmitoyl cysteine attachment occurs at residues C558 and C567. 9 LRR repeats span residues 632 to 656, 702 to 725, 727 to 750, 755 to 778, 783 to 806, 839 to 862, 867 to 891, 895 to 918, and 923 to 946; these read LKSLPRVQVESFNQVQAMPTFIWML, FPKRLALDLDNNNLNDYGVRELQP, FSRLTVLRLSVNQITDGGVKVLSE, YKIVTYLGLYNNQITDVGARYVTK, CKGLTHLKLGKNKITSEGGKYLAL, HPSLTTLSLASNGISTEGGKSLAR, NTSLEILWLTQNELNDEVAESLAEM, NQTLKHLWLIQNQITAKGTAQLAD, and NTGITEICLNGNLIKPEEAKVYED. The S-palmitoyl cysteine moiety is linked to residue C952.

The protein belongs to the NOD1-NOD2 family. Homooligomer: homooligomerizes following ligand-binding, promoting RIPK2 recruitment. Interacts (via CARD domain) with RIPK2 (via CARD domain). Following RIPK2 recruitment, RIPK2 homooligomerizes via its CARD domain and forms long filaments named RIPosomes. Interacts with ARHGEF2. Interacts (via CARD domain) with ubiquitin; inhibiting interaction with RIPK2. Interacts with NLRP10 and recruits it to the cell membrane following invasive bacterial infection. Interacts with IFIH1; this interaction promotes transcription of antiviral genes and inhibition of viral replication. Interacts with IRGM; promoting NOD1 degradation. Interacts with ATG16L1. Post-translationally, palmitoylated. Palmitoylation is required for proper recruitment to the bacterial entry site and hence for proper signaling upon cognate peptidoglycan detection. In terms of processing, ubiquitinated. 'Lys-48'-linked polyubiquitination by RNF34 promotes proteasomal degradation and thereby negatively regulates NOD1 for instance in NF-kappa-B activation. Degraded via selective autophagy following interaction with IRGM. IRGM promotes NOD1-RIPK2 RIPosome recruitment to autophagosome membranes, promoting their SQSTM1/p62-dependent autophagic degradation. In terms of tissue distribution, highly expressed in adult heart, skeletal muscle, pancreas, spleen and ovary. Also detected in placenta, lung, liver, kidney, thymus, testis, small intestine and colon.

Its subcellular location is the cell membrane. It is found in the apical cell membrane. It localises to the basolateral cell membrane. The protein resides in the cytoplasm. In terms of biological role, pattern recognition receptor (PRR) that detects bacterial peptidoglycan fragments and other danger signals and thus participates in both innate and adaptive immune responses. Specifically recognizes and binds gamma-D-glutamyl-meso-diaminopimelic acid (iE-DAP), a dipeptide present in peptidoglycan of Gram-negative bacteria. Preferentially binds iE-DAP in tripeptide-containing muropeptides (MurNAc-TriDAP or TriDAP). Ligand binding triggers oligomerization that facilitates the binding and subsequent activation of the proximal adapter receptor-interacting RIPK2. Following recruitment, RIPK2 undergoes 'Met-1'- (linear) and 'Lys-63'-linked polyubiquitination by E3 ubiquitin-protein ligases XIAP, BIRC2, BIRC3 and the LUBAC complex, becoming a scaffolding protein for downstream effectors, triggering activation of the NF-kappa-B and MAP kinases signaling. This in turn leads to the transcriptional activation of hundreds of genes involved in immune response. Also acts as a regulator of antiviral response elicited by dsRNA and the expression of RLR pathway members by targeting IFIH1 and TRAF3 to modulate the formation of IFIH1-MAVS and TRAF3-MAVS complexes leading to increased transcription of type I IFNs. Also acts as a regulator of autophagy via its interaction with ATG16L1, possibly by recruiting ATG16L1 at the site of bacterial entry. Besides recognizing pathogens, also involved in the endoplasmic reticulum stress response: acts by sensing and binding to the cytosolic metabolite sphingosine-1-phosphate generated in response to endoplasmic reticulum stress, initiating an inflammation process that leads to activation of the NF-kappa-B and MAP kinases signaling. In addition, plays a role in insulin trafficking in beta cells in a cell-autonomous manner. Mechanistically, upon recognizing cognate ligands, NOD1 and RIPK2 localize to insulin vesicles where they recruit RAB1A to direct insulin trafficking through the cytoplasm. Functionally, in contrast to isoform 1, does not efficiently recognize and bind gamma-D-glutamyl-meso-diaminopimelic acid (iE-DAP) ligand. The chain is Nucleotide-binding oligomerization domain-containing protein 1 from Homo sapiens (Human).